Consider the following 97-residue polypeptide: ATP-dependent Clp protease adapter protein ClpS (97 aa).

The protein belongs to the ClpS family. As to quaternary structure, binds to the N-terminal domain of the chaperone ClpA.

In terms of biological role, involved in the modulation of the specificity of the ClpAP-mediated ATP-dependent protein degradation. This chain is ATP-dependent Clp protease adapter protein ClpS, found in Nostoc sp. (strain PCC 7120 / SAG 25.82 / UTEX 2576).